Reading from the N-terminus, the 153-residue chain is uncharacterized protein (153 aa).

The signal sequence occupies residues 1-19 (MRKYIPLVLFIFSWPVLCA). Catalysis depends on residues R46, E54, and R88.

The protein belongs to the thermonuclease family.

This is an uncharacterized protein from Escherichia coli O157:H7.